The chain runs to 316 residues: Ribose-phosphate pyrophosphokinase (316 aa).

ATP contacts are provided by residues 42–44 (DGE) and 101–102 (RQ). Residues histidine 135 and aspartate 174 each coordinate Mg(2+). The active site involves lysine 197. Residues arginine 199, aspartate 223, and 227-231 (DTAGT) each bind D-ribose 5-phosphate.

Belongs to the ribose-phosphate pyrophosphokinase family. Class I subfamily. Homohexamer. The cofactor is Mg(2+).

It localises to the cytoplasm. The enzyme catalyses D-ribose 5-phosphate + ATP = 5-phospho-alpha-D-ribose 1-diphosphate + AMP + H(+). It functions in the pathway metabolic intermediate biosynthesis; 5-phospho-alpha-D-ribose 1-diphosphate biosynthesis; 5-phospho-alpha-D-ribose 1-diphosphate from D-ribose 5-phosphate (route I): step 1/1. Involved in the biosynthesis of the central metabolite phospho-alpha-D-ribosyl-1-pyrophosphate (PRPP) via the transfer of pyrophosphoryl group from ATP to 1-hydroxyl of ribose-5-phosphate (Rib-5-P). This Halalkalibacterium halodurans (strain ATCC BAA-125 / DSM 18197 / FERM 7344 / JCM 9153 / C-125) (Bacillus halodurans) protein is Ribose-phosphate pyrophosphokinase.